We begin with the raw amino-acid sequence, 188 residues long: MRVIASSIRKGNVIEQDGKLYVVLTAENIHPGKGTPVSQIEMRRISDGVKISERYKTTDQVERATIEDHNFTFLYEDADGFHFMNAENYDQVQVPKDVVGNVAPYLQENMVVKLSLHEMVPVAITLPQRVTLEVVETEPVTKGQTASSSYKPAMLSNGVRTGVPPHVAVGTRIVVMTEDGSYVERAKD.

It belongs to the elongation factor P family.

The protein localises to the cytoplasm. Its pathway is protein biosynthesis; polypeptide chain elongation. Functionally, involved in peptide bond synthesis. Stimulates efficient translation and peptide-bond synthesis on native or reconstituted 70S ribosomes in vitro. Probably functions indirectly by altering the affinity of the ribosome for aminoacyl-tRNA, thus increasing their reactivity as acceptors for peptidyl transferase. The sequence is that of Elongation factor P from Nitrobacter hamburgensis (strain DSM 10229 / NCIMB 13809 / X14).